Consider the following 290-residue polypeptide: UPF0761 membrane protein YihY (290 aa).

6 consecutive transmembrane segments (helical) span residues 44–64 (LLSL…FPMF), 104–124 (VGAC…DSAL), 140–160 (FAVY…SLAI), 183–203 (ILPL…VPTT), 210–230 (ALVG…GFAL), and 244–264 (VLAV…IVLL).

Belongs to the UPF0761 family.

The protein localises to the cell inner membrane. This chain is UPF0761 membrane protein YihY, found in Salmonella paratyphi B (strain ATCC BAA-1250 / SPB7).